Reading from the N-terminus, the 172-residue chain is Adenine phosphoribosyltransferase (172 aa).

Belongs to the purine/pyrimidine phosphoribosyltransferase family. As to quaternary structure, homodimer.

The protein resides in the cytoplasm. It catalyses the reaction AMP + diphosphate = 5-phospho-alpha-D-ribose 1-diphosphate + adenine. It participates in purine metabolism; AMP biosynthesis via salvage pathway; AMP from adenine: step 1/1. Catalyzes a salvage reaction resulting in the formation of AMP, that is energically less costly than de novo synthesis. In Exiguobacterium sibiricum (strain DSM 17290 / CCUG 55495 / CIP 109462 / JCM 13490 / 255-15), this protein is Adenine phosphoribosyltransferase.